Reading from the N-terminus, the 146-residue chain is Cystatin-C (146 aa).

The first 26 residues, 1–26 (MAGPLRAPLLLLAILAVALAVSPAAG), serve as a signal peptide directing secretion. Serine 43 carries the phosphoserine; by FAM20C modification. The Secondary area of contact motif lies at 81–85 (QIVAG). 2 cysteine pairs are disulfide-bonded: cysteine 99-cysteine 109 and cysteine 123-cysteine 143.

This sequence belongs to the cystatin family. In terms of assembly, homodimer. Post-translationally, the Thr-25 variant is O-glycosylated with a core 1 or possibly core 8 glycan. The signal peptide of the O-glycosylated Thr-25 variant is cleaved between Ala-20 and Val-21. As to expression, expressed in submandibular and sublingual saliva but not in parotid saliva (at protein level). Expressed in various body fluids, such as the cerebrospinal fluid and plasma. Expressed in highest levels in the epididymis, vas deferens, brain, thymus, and ovary and the lowest in the submandibular gland.

The protein localises to the secreted. Its function is as follows. As an inhibitor of cysteine proteinases, this protein is thought to serve an important physiological role as a local regulator of this enzyme activity. The sequence is that of Cystatin-C (CST3) from Homo sapiens (Human).